Here is an 81-residue protein sequence, read N- to C-terminus: NAD(P)H-quinone oxidoreductase subunit L (81 aa).

Helical transmembrane passes span 13–33 (LLVI…IPLF) and 51–71 (LGIY…APFL).

The protein belongs to the complex I NdhL subunit family. NDH-1 can be composed of about 15 different subunits; different subcomplexes with different compositions have been identified which probably have different functions.

It localises to the cellular thylakoid membrane. It carries out the reaction a plastoquinone + NADH + (n+1) H(+)(in) = a plastoquinol + NAD(+) + n H(+)(out). The enzyme catalyses a plastoquinone + NADPH + (n+1) H(+)(in) = a plastoquinol + NADP(+) + n H(+)(out). Functionally, NDH-1 shuttles electrons from an unknown electron donor, via FMN and iron-sulfur (Fe-S) centers, to quinones in the respiratory and/or the photosynthetic chain. The immediate electron acceptor for the enzyme in this species is believed to be plastoquinone. Couples the redox reaction to proton translocation, and thus conserves the redox energy in a proton gradient. Cyanobacterial NDH-1 also plays a role in inorganic carbon-concentration. The protein is NAD(P)H-quinone oxidoreductase subunit L of Synechococcus sp. (strain WH7803).